The sequence spans 189 residues: Chitin synthase 1 (189 aa).

The protein belongs to the chitin synthase family.

It is found in the cell membrane. It catalyses the reaction [(1-&gt;4)-N-acetyl-beta-D-glucosaminyl](n) + UDP-N-acetyl-alpha-D-glucosamine = [(1-&gt;4)-N-acetyl-beta-D-glucosaminyl](n+1) + UDP + H(+). In terms of biological role, polymerizes chitin, a structural polymer of the cell wall and septum, by transferring the sugar moiety of UDP-GlcNAc to the non-reducing end of the growing chitin polymer. This chain is Chitin synthase 1 (CHS1), found in Exophiala exophialae (Black yeast-like fungus).